Here is a 226-residue protein sequence, read N- to C-terminus: 2-C-methyl-D-erythritol 4-phosphate cytidylyltransferase (226 aa).

The protein belongs to the IspD/TarI cytidylyltransferase family. IspD subfamily.

It catalyses the reaction 2-C-methyl-D-erythritol 4-phosphate + CTP + H(+) = 4-CDP-2-C-methyl-D-erythritol + diphosphate. It participates in isoprenoid biosynthesis; isopentenyl diphosphate biosynthesis via DXP pathway; isopentenyl diphosphate from 1-deoxy-D-xylulose 5-phosphate: step 2/6. Functionally, catalyzes the formation of 4-diphosphocytidyl-2-C-methyl-D-erythritol from CTP and 2-C-methyl-D-erythritol 4-phosphate (MEP). This is 2-C-methyl-D-erythritol 4-phosphate cytidylyltransferase from Bacillus cereus (strain ATCC 10987 / NRS 248).